Consider the following 251-residue polypeptide: Coenzyme F420:L-glutamate ligase (251 aa).

Residues L9 to I12, S38 to T39, and K43 contribute to the GTP site. An a divalent metal cation-binding site is contributed by D113. N116 contacts GTP. A divalent metal cation-binding residues include D149, T150, and E207. Position 205-212 (A205–T212) interacts with GTP.

This sequence belongs to the CofE family. In terms of assembly, homodimer. The cofactor is Mg(2+). Mn(2+) is required as a cofactor. Requires K(+) as cofactor.

The catalysed reaction is oxidized coenzyme F420-0 + GTP + L-glutamate = oxidized coenzyme F420-1 + GDP + phosphate + H(+). The enzyme catalyses oxidized coenzyme F420-1 + GTP + L-glutamate = oxidized coenzyme F420-2 + GDP + phosphate + H(+). Its pathway is cofactor biosynthesis; coenzyme F420 biosynthesis. In terms of biological role, catalyzes the GTP-dependent successive addition of two or more gamma-linked L-glutamates to the L-lactyl phosphodiester of 7,8-didemethyl-8-hydroxy-5-deazariboflavin (F420-0) to form coenzyme F420-0-glutamyl-glutamate (F420-2) or polyglutamated F420 derivatives. The polypeptide is Coenzyme F420:L-glutamate ligase (Halorubrum lacusprofundi (strain ATCC 49239 / DSM 5036 / JCM 8891 / ACAM 34)).